Consider the following 907-residue polypeptide: MLLLTILPASLMAAMLGGYFTWMQLSELQSQLLQRGEMIAQDLAPLAANALGRKDKVLLSRIATQTLEQTDVRAVSFLDTDRTVLAHAGPTMISPSPIGSGSQLLSSTGTDATRYLLPVFGSQRHLTSPIIPAEADTLLGWVELEISHNGTLLRGYRSLFASLLLILTGLAFTATLAVRMSRTINGPMSQIKQAVSQLKDGNLETRLPPLGSRELDELASGINRMAATLQNAQEELQLSIDQATEDVRQNLETIEIQNIELDLARKEALEASRIKSEFLANMSHEIRTPLNGILGFTHLLQKSELTPRQFDYLGTIEKSADNLLSIINEILDFSKIEAGKLVLDNIPFNLRDLLQDTLTILAPAAHAKQLELVSLVYRDTPLALSGDPLRLRQILTNLVSNAIKFTREGTIVARAMLEDETEEHAQLRISVQDTGIGLSSQDVRALFQAFSQADNSLSRQPGGTGLGLVISKRLIEQMGGEIGVDSTPGEGSEFWISLKLPKAREDKEESLNIPLGGLRAAVLEHHDLARQALEHQLEDCGLQTIVFNNLENLLNGVTAAHETPAAIDLAVLGVTALEISPERLRQHIWDLENLNCKVMVLCPTTEHALFQLAVHDVYTQLQAKPACTRKLQKALSELIAPRAVRADIGPPLSSRAPRVLCVDDNPANLLLVQTLLEDMGAEVVAVEGGYAAVNAVQQEAFDLVLMDVQMPGMDGRQATEAIRAWEAERNQSSLPIVALTAHAMANEKRSLLQSGMDDYLTKPISERQLAQVVLKWTGLALRNPAPERQNEALEVHVGPLVLDHEEGLRLAAGKADLAADMLAMLLASLDADREAIRVARANQDVHALIERIHRLHGATRYCGVPQLRSACQRAETLLKQNAPHTEEALNDLDKAIIRLEAEARVMA.

The next 3 membrane-spanning stretches (helical) occupy residues 9-25, 84-101, and 159-178; these read ASLM…WMQL, VLAH…IGSG, and LFAS…TLAV. The HAMP domain maps to 182 to 234; it reads RTINGPMSQIKQAVSQLKDGNLETRLPPLGSRELDELASGINRMAATLQNAQE. The region spanning 281-502 is the Histidine kinase domain; sequence NMSHEIRTPL…EFWISLKLPK (222 aa). Position 284 is a phosphohistidine; by autocatalysis (histidine 284). The Response regulatory domain occupies 658–777; that stretch reads RVLCVDDNPA…QLAQVVLKWT (120 aa). Position 707 is a 4-aspartylphosphate (aspartate 707). Residues 814–907 form the HPt domain; that stretch reads KADLAADMLA…RLEAEARVMA (94 aa). Histidine 853 bears the Phosphohistidine mark.

Post-translationally, activation requires a sequential transfer of a phosphate group from a His in the primary transmitter domain, to an Asp in the receiver domain and to a His in the secondary transmitter domain.

It localises to the cell inner membrane. The enzyme catalyses ATP + protein L-histidine = ADP + protein N-phospho-L-histidine.. Functionally, forms part of a two-component regulatory system GacA/GacS(LemA). May be involved in lesion formation, swarming and in the production of extracellular protease, syringomycin and N-acyl-L-homoserine lactone (acyl-HSL). Required for pathogenicity on bean. The protein is Sensor protein GacS (gacS) of Pseudomonas syringae pv. syringae.